Here is an 83-residue protein sequence, read N- to C-terminus: Mu-theraphotoxin-Hhn2b 3 (83 aa).

The signal sequence occupies residues 1–21 (MKASMFLALAGLVLLFVVCYA). Residues 22–48 (SESEEKEFPRELISKIFAVDDFKGEVR) constitute a propeptide that is removed on maturation. 3 disulfides stabilise this stretch: Cys50–Cys65, Cys57–Cys70, and Cys64–Cys77. Leucine amide is present on Leu81.

It belongs to the neurotoxin 10 (Hwtx-1) family. 14 (Hntx-1) subfamily. In terms of assembly, monomer. Expressed by the venom gland.

It is found in the secreted. Its function is as follows. Weakly blocks the rat SCN2A/SCN1B (Nav1.2/beta-1) sodium channel (IC(50)=68 uM) and the insect sodium channel para/tipE (IC(50)=4.3 uM), without altering the activation or inactivation kinetics (depressant toxin). This Cyriopagopus hainanus (Chinese bird spider) protein is Mu-theraphotoxin-Hhn2b 3.